The following is a 419-amino-acid chain: UDP-N-acetylglucosamine 1-carboxyvinyltransferase (419 aa).

Residue 22 to 23 (KN) coordinates phosphoenolpyruvate. R95 lines the UDP-N-acetyl-alpha-D-glucosamine pocket. C119 acts as the Proton donor in catalysis. The residue at position 119 (C119) is a 2-(S-cysteinyl)pyruvic acid O-phosphothioketal. The UDP-N-acetyl-alpha-D-glucosamine site is built by D308 and I330.

The protein belongs to the EPSP synthase family. MurA subfamily.

It localises to the cytoplasm. The catalysed reaction is phosphoenolpyruvate + UDP-N-acetyl-alpha-D-glucosamine = UDP-N-acetyl-3-O-(1-carboxyvinyl)-alpha-D-glucosamine + phosphate. It functions in the pathway cell wall biogenesis; peptidoglycan biosynthesis. In terms of biological role, cell wall formation. Adds enolpyruvyl to UDP-N-acetylglucosamine. This Rickettsia bellii (strain OSU 85-389) protein is UDP-N-acetylglucosamine 1-carboxyvinyltransferase.